Reading from the N-terminus, the 281-residue chain is Phosphatidylglycerol--prolipoprotein diacylglyceryl transferase (281 aa).

Transmembrane regions (helical) follow at residues 11-31, 57-77, and 89-109; these read IIFT…VISF, LLYS…IIFY, and VFYI…AIIV. R140 provides a ligand contact to a 1,2-diacyl-sn-glycero-3-phospho-(1'-sn-glycerol). 3 helical membrane passes run 194–214, 222–242, and 255–275; these read PTQL…IYFF, GSIS…IEFF, and IITM…IIMY.

Belongs to the Lgt family.

The protein localises to the cell inner membrane. It catalyses the reaction L-cysteinyl-[prolipoprotein] + a 1,2-diacyl-sn-glycero-3-phospho-(1'-sn-glycerol) = an S-1,2-diacyl-sn-glyceryl-L-cysteinyl-[prolipoprotein] + sn-glycerol 1-phosphate + H(+). Its pathway is protein modification; lipoprotein biosynthesis (diacylglyceryl transfer). In terms of biological role, catalyzes the transfer of the diacylglyceryl group from phosphatidylglycerol to the sulfhydryl group of the N-terminal cysteine of a prolipoprotein, the first step in the formation of mature lipoproteins. In Buchnera aphidicola subsp. Acyrthosiphon pisum (strain APS) (Acyrthosiphon pisum symbiotic bacterium), this protein is Phosphatidylglycerol--prolipoprotein diacylglyceryl transferase.